A 557-amino-acid polypeptide reads, in one-letter code: Cytochrome P450 monooxygenase FSL4 (557 aa).

The next 2 helical transmembrane spans lie at 6 to 26 and 32 to 52; these read LWLV…IFLL and IVVC…YWTV. Residues Asn127 and Asn393 are each glycosylated (N-linked (GlcNAc...) asparagine). Residue Cys494 participates in heme binding.

This sequence belongs to the cytochrome P450 family. The cofactor is heme.

The protein localises to the membrane. Its pathway is secondary metabolite biosynthesis. Its function is as follows. Cytochrome P450 monooxygenase; part of the gene cluster that mediates the biosynthesis of fusarielins F, G and H, decaketide compounds with 5 methylations and a decaline core that act as mycoestrogens as they stimulate growth of MCF-7 breast cancer cells. The initial compound in the pathway is produced by the reducing polyketide synthase FSL1. FSL1 lacks an active enoyl reductase (ER) domain and biosynthesis of fusarielins relies on the trans-acting enoyl reductase FSL5, before it is released through hydrolysis catalyzed by the thioesterase FSL2. Fusarielins F, G, and H have a C11=C12 cis double bond and is fully reduced between C10 and C11 and between C12 and C13. FSL3 can be involved in the formation of the C11=C12 cis double bond by moving a hypothetical C10=C11 or C12=C13 trans double bond to form prefusarielin. Prefusarielin is oxygenated at C15 and C16 by FSL4, resulting in fusarielin F, which subsequently is epoxidized into fusarielin G by the same enzyme. The final step in the pathway is a reduction of the carboxylic acid moiety to yield fusarielin H via a still undetermined mechanism. This Gibberella zeae (strain ATCC MYA-4620 / CBS 123657 / FGSC 9075 / NRRL 31084 / PH-1) (Wheat head blight fungus) protein is Cytochrome P450 monooxygenase FSL4.